Reading from the N-terminus, the 384-residue chain is Putative odorant receptor 98b (384 aa).

Residues 1-34 (MLTDKFLRLQSALFRLLGLELLHEQDVGHRYPWR) are Cytoplasmic-facing. The helical transmembrane segment at 35–55 (SICCILSVASFMPLTIAFGLQ) threads the bilayer. Residues 56-66 (NVQNVEQLTDS) lie on the Extracellular side of the membrane. The helical transmembrane segment at 67–87 (LCSVLVDLLALCKIGLFLWLY) threads the bilayer. Topologically, residues 88–128 (KDFKFLIGQFYCVLQTETHTAVAEMIVTRESRRDQFISAMY) are cytoplasmic. The helical transmembrane segment at 129–149 (AYCFITAGLSACLMSPLSMLI) threads the bilayer. Residues 150-177 (SYQRTGELQPKFPFPSVYPWDNMKLSNY) are Extracellular-facing. A helical membrane pass occupies residues 178–198 (IISYFWNVCAALGVALPTVCV). Residues 199–258 (DTLFCSLSHNLCALFQIARHKMMHFEGRNTKETHENLKHVFQLYALCLNLGHFLNEYFRP) lie on the Cytoplasmic side of the membrane. The chain crosses the membrane as a helical span at residues 259–279 (LICQFVAASLHLCVLCYQLSA). The Extracellular portion of the chain corresponds to 280–284 (NILQP). Residues 285 to 305 (ALLFYAAFTAAVVGQVSIYCF) form a helical membrane-spanning segment. At 306-329 (CGSSIHSECQLFGQAIYESSWPHL) the chain is on the cytoplasmic side. A helical membrane pass occupies residues 330 to 350 (LQENLQLVSSLKIAMMRSSLG). The Extracellular portion of the chain corresponds to 351 to 384 (CPIDGYFFEANRETLITVSKAFIKVSKKTPQVND).

This sequence belongs to the insect chemoreceptor superfamily. Heteromeric odorant receptor channel (TC 1.A.69) family. Or1a subfamily. In terms of assembly, interacts with Orco. Complexes exist early in the endomembrane system in olfactory sensory neurons (OSNs), coupling these complexes to the conserved ciliary trafficking pathway.

Its subcellular location is the cell membrane. Odorant receptor which mediates acceptance or avoidance behavior, depending on its substrates. The odorant receptor repertoire encodes a large collection of odor stimuli that vary widely in identity, intensity, and duration. May form a complex with Orco to form odorant-sensing units, providing sensitive and prolonged odorant signaling and calcium permeability. The chain is Putative odorant receptor 98b (Or98b) from Drosophila melanogaster (Fruit fly).